We begin with the raw amino-acid sequence, 801 residues long: Growth-differentiation transition protein 7 (801 aa).

The N-terminal stretch at 1 to 22 is a signal peptide; it reads MIKTILIKLILLVIFCYHFLFA.

It belongs to the GDT family.

It is found in the secreted. This Dictyostelium discoideum (Social amoeba) protein is Growth-differentiation transition protein 7 (gdt7).